Consider the following 257-residue polypeptide: Diphthine synthase (257 aa).

S-adenosyl-L-methionine contacts are provided by residues L9, D83, M86, 111 to 112, and I163; that span reads SI.

It belongs to the diphthine synthase family. Homodimer.

The enzyme catalyses 2-[(3S)-amino-3-carboxypropyl]-L-histidyl-[translation elongation factor 2] + 3 S-adenosyl-L-methionine = diphthine-[translation elongation factor 2] + 3 S-adenosyl-L-homocysteine + 3 H(+). It functions in the pathway protein modification; peptidyl-diphthamide biosynthesis. In terms of biological role, S-adenosyl-L-methionine-dependent methyltransferase that catalyzes the trimethylation of the amino group of the modified target histidine residue in translation elongation factor 2 (EF-2), to form an intermediate called diphthine. The three successive methylation reactions represent the second step of diphthamide biosynthesis. This Thermoplasma acidophilum (strain ATCC 25905 / DSM 1728 / JCM 9062 / NBRC 15155 / AMRC-C165) protein is Diphthine synthase.